The following is a 99-amino-acid chain: Protein Frey (99 aa).

A helical transmembrane segment spans residues 10–29; that stretch reads YPRAGLSLFLFYLILAGALL. A disordered region spans residues 60-90; the sequence is DYGLRPKHPRPGGPRPLLSQAQQRKRDGPNM.

As to quaternary structure, interacts with SPPL2C (via active sites); the interaction stabilizes FREY1 protein and inhibits SPPL2C proteolytic activity. Interacts with IZUMO1; the interaction retains IZUMO1 at the endoplasmic reticulum membrane and coordinates IZUMO1 complex assembly. In terms of tissue distribution, expressed in round spermatids (at protein level).

It is found in the endoplasmic reticulum membrane. Key regulator for male fertility expressed transiently in round spermatids where it recruits IZUMO1 at the endoplasmic reticulum (ER) membrane and coordinates the oolemmal binding multimeric complex (IZUMO1 complex) assembly. Upon complete assembly of the IZUMO1 complex, its ER retention is released, facilitating IZUMO1 complex export to the acrosome. Through the interaction with SPPL2C, inhibits its intramembrane protease activity directly accessing the catalytic center of an I-CLiP. This Mus musculus (Mouse) protein is Protein Frey.